The following is a 971-amino-acid chain: Protein ALWAYS EARLY 1 (971 aa).

Residues 1–11 show a composition bias toward basic residues; that stretch reads MAPTRKSKSVN. 5 disordered regions span residues 1 to 40, 117 to 137, 197 to 260, 326 to 371, and 421 to 507; these read MAPTRKSKSVNKRFTNEASPDINFGSASKTKQRKKKLADK, SESEGEDHDASEVTRKHLKRK, IEDF…MFEN, GLLE…GLED, and PKES…KISL. In terms of domain architecture, SANT spans 40–98; it reads KLGPQWTKRELVRFYDAYRKYVGDWKKVAAAVRNNRSVEMVETLFCMNRAYLSLPEGTA. 3 stretches are compositionally biased toward basic and acidic residues: residues 209 to 219, 332 to 350, and 424 to 440; these read KQLDADDDASR, SSPHWEEERKTNNVDKKSN, and STQDKSLYTKESAEVDS. The segment covering 450–470 has biased composition (polar residues); that stretch reads SSQGPAKQLKTAKTTVESSSA.

In terms of tissue distribution, expressed ubiquitously in vegetative and reproductive tissues.

It is found in the nucleus. The sequence is that of Protein ALWAYS EARLY 1 (ALY1) from Arabidopsis thaliana (Mouse-ear cress).